We begin with the raw amino-acid sequence, 292 residues long: MFTGSLVAIVTPMLEDGALDLDRFCALIDFHIEQKTDGIVVVGTTGESPTVDFDEHHLLIRTAVTHAAGRIPVIAGTGANSTREAIELTVFSKNAGADACLSVAPYYNKPTQEGLYQHFKAIAEAVDIPMILYNVPGRTVVDISNDTALRLAQIPGIVGIKDATGNIARGCDLLQRVPDNFAVYSGDDATALALLLLGGHGTISVTANVAPRLMHEMCTAAFAGDLARAREINTRLFRLHIDLFVEANPIPVKWAVARMGLINDSLRLPLTALSSQYHELIRKAMLQAGITV.

Residue threonine 45 coordinates pyruvate. Residue tyrosine 133 is the Proton donor/acceptor of the active site. Lysine 161 acts as the Schiff-base intermediate with substrate in catalysis. Isoleucine 203 is a pyruvate binding site.

This sequence belongs to the DapA family. In terms of assembly, homotetramer; dimer of dimers.

The protein localises to the cytoplasm. The enzyme catalyses L-aspartate 4-semialdehyde + pyruvate = (2S,4S)-4-hydroxy-2,3,4,5-tetrahydrodipicolinate + H2O + H(+). Its pathway is amino-acid biosynthesis; L-lysine biosynthesis via DAP pathway; (S)-tetrahydrodipicolinate from L-aspartate: step 3/4. Its function is as follows. Catalyzes the condensation of (S)-aspartate-beta-semialdehyde [(S)-ASA] and pyruvate to 4-hydroxy-tetrahydrodipicolinate (HTPA). The chain is 4-hydroxy-tetrahydrodipicolinate synthase from Nitrosomonas europaea (strain ATCC 19718 / CIP 103999 / KCTC 2705 / NBRC 14298).